Consider the following 136-residue polypeptide: Large ribosomal subunit protein uL16 (136 aa).

The protein belongs to the universal ribosomal protein uL16 family. In terms of assembly, part of the 50S ribosomal subunit.

Binds 23S rRNA and is also seen to make contacts with the A and possibly P site tRNAs. The protein is Large ribosomal subunit protein uL16 of Salmonella agona (strain SL483).